Here is a 200-residue protein sequence, read N- to C-terminus: Probable molybdenum cofactor guanylyltransferase (200 aa).

GTP contacts are provided by residues 9–11 (LAG), Lys-21, Asp-69, and Asp-100. Asp-100 lines the Mg(2+) pocket.

It belongs to the MobA family. The cofactor is Mg(2+).

Its subcellular location is the cytoplasm. It carries out the reaction Mo-molybdopterin + GTP + H(+) = Mo-molybdopterin guanine dinucleotide + diphosphate. Transfers a GMP moiety from GTP to Mo-molybdopterin (Mo-MPT) cofactor (Moco or molybdenum cofactor) to form Mo-molybdopterin guanine dinucleotide (Mo-MGD) cofactor. In Bacillus cereus (strain AH187), this protein is Probable molybdenum cofactor guanylyltransferase.